The following is a 65-amino-acid chain: uncharacterized protein (65 aa).

This is an uncharacterized protein from Escherichia coli (Bacteriophage T4).